The following is a 1587-amino-acid chain: Sister chromatid cohesion protein mis4 (1587 aa).

Residues 140–172 are disordered; the sequence is PKEKPDASSINTNRSSSDNGFLTPSSSPRSPSC. The span at 147 to 162 shows a compositional bias: polar residues; the sequence is SSINTNRSSSDNGFLT. Residues 163–172 show a composition bias toward low complexity; it reads PSSSPRSPSC. Residue S183 is modified to Phosphoserine. HEAT repeat units lie at residues 775–812, 814–851, 853–888, 890–927, 1101–1140, and 1183–1220; these read LNLK…IPSI, RTHP…AYRE, IPQI…ATED, NIRV…SPAS, ATLM…ARHS, and DAYV…RETS.

It belongs to the SCC2/Nipped-B family. Interacts with ssl3.

Its subcellular location is the nucleus. It localises to the chromosome. Functionally, plays a structural role in chromatin. Chromatid cohesion molecule required for equal sister chromatid separation in anaphase. May form a stable link between chromatids in S phase that is split rather than removed in anaphase. Also required for spindle-kinetochore interaction in early mitosis and inhibit sister chromatid separation until the cleavage of Rad21 in anaphase. The protein is Sister chromatid cohesion protein mis4 (mis4) of Schizosaccharomyces pombe (strain 972 / ATCC 24843) (Fission yeast).